Reading from the N-terminus, the 253-residue chain is ATP synthase subunit a (253 aa).

The next 6 membrane-spanning stretches (helical) occupy residues 27 to 47 (ISFTNASGFMLLGVVLVIGFF), 87 to 107 (FFPFVFTLFFFILFANLIGMV), 117 to 137 (IIVTGALAMTVILMVIVVGLI), 146 to 166 (LFAPSGAPLPIYIILTPIEII), 196 to 216 (FTVMLIGAGAIYIPVAALAFA), and 224 to 244 (LEFLVAGLQAYVFAILTCVYL).

Belongs to the ATPase A chain family. In terms of assembly, F-type ATPases have 2 components, CF(1) - the catalytic core - and CF(0) - the membrane proton channel. CF(1) has five subunits: alpha(3), beta(3), gamma(1), delta(1), epsilon(1). CF(0) has three main subunits: a(1), b(2) and c(9-12). The alpha and beta chains form an alternating ring which encloses part of the gamma chain. CF(1) is attached to CF(0) by a central stalk formed by the gamma and epsilon chains, while a peripheral stalk is formed by the delta and b chains.

It localises to the cell inner membrane. Functionally, key component of the proton channel; it plays a direct role in the translocation of protons across the membrane. The polypeptide is ATP synthase subunit a (Hyphomonas neptunium (strain ATCC 15444)).